A 604-amino-acid polypeptide reads, in one-letter code: Prostaglandin G/H synthase 2 (604 aa).

A signal peptide spans 1 to 17 (MLARALLLCAAVALSGA). One can recognise an EGF-like domain in the interval 18–55 (ANPCCSHPCQNRGVCMSVGFDQYKCDCTRTGFYGENCT). 4 disulfides stabilise this stretch: cysteine 21–cysteine 32, cysteine 22–cysteine 145, cysteine 26–cysteine 42, and cysteine 44–cysteine 54. A glycan (N-linked (GlcNAc...) asparagine) is linked at asparagine 53. Residue arginine 106 participates in substrate binding. The N-linked (GlcNAc...) asparagine glycan is linked to asparagine 130. The Proton acceptor role is filled by histidine 193. Tyrosine 341 is a binding site for substrate. The active-site For cyclooxygenase activity is tyrosine 371. Heme b is bound at residue histidine 374. Asparagine 396 carries N-linked (GlcNAc...) asparagine glycosylation. Cysteine 526 bears the S-nitrosocysteine mark. Residues cysteine 555 and cysteine 561 are joined by a disulfide bond. Residue serine 565 is modified to O-acetylserine. A glycan (N-linked (GlcNAc...) asparagine) is linked at asparagine 580.

This sequence belongs to the prostaglandin G/H synthase family. As to quaternary structure, homodimer. Heme b serves as cofactor. In terms of processing, S-nitrosylation by NOS2 (iNOS) activates enzyme activity. S-nitrosylation may take place on different Cys residues in addition to Cys-526. Acetylated at Ser-565 by SPHK1. During neuroinflammation, acetylation by SPHK1 promotes neuronal secretion of specialized preresolving mediators (SPMs), especially 15-R-lipoxin A4, which results in an increase of phagocytic microglia.

The protein localises to the microsome membrane. Its subcellular location is the endoplasmic reticulum membrane. The protein resides in the nucleus inner membrane. It localises to the nucleus outer membrane. It catalyses the reaction (5Z,8Z,11Z,14Z)-eicosatetraenoate + AH2 + 2 O2 = prostaglandin H2 + A + H2O. The catalysed reaction is (5Z,8Z,11Z,14Z)-eicosatetraenoate + 2 O2 = prostaglandin G2. The enzyme catalyses prostaglandin G2 + AH2 = prostaglandin H2 + A + H2O. It carries out the reaction (5Z,8Z,11Z,14Z,17Z)-eicosapentaenoate + 2 O2 = prostaglandin G3. It catalyses the reaction prostaglandin G3 + AH2 = prostaglandin H3 + A + H2O. The catalysed reaction is (8Z,11Z,14Z)-eicosatrienoate + 2 O2 = prostaglandin G1. The enzyme catalyses prostaglandin G1 + AH2 = prostaglandin H1 + A + H2O. It carries out the reaction 2-(5Z,8Z,11Z,14Z)-eicosatetraenoyl-sn-glycero-3-phosphoethanolamine + 2 O2 = 2-(prostaglandin G2)-sn-glycero-3-phosphoethanolamine. It catalyses the reaction 2-(prostaglandin G2)-sn-glycero-3-phosphoethanolamine + AH2 = 2-(prostaglandin H2)-sn-glycero-3-phosphoethanolamine + A + H2O. The catalysed reaction is 2-(5Z,8Z,11Z,14Z)-eicosatetraenoyl-sn-glycero-3-phosphocholine + 2 O2 = 2-(prostaglandin G2)-sn-glycero-3-phosphocholine. The enzyme catalyses 2-(prostaglandin G2)-sn-glycero-3-phosphocholine + AH2 = 2-(prostaglandin H2)-sn-glycero-3-phosphocholine + A + H2O. It carries out the reaction (15S)-hydroperoxy-(5Z,8Z,11Z,13E)-eicosatetraenoate + AH2 = (15S)-hydroxy-(5Z,8Z,11Z,13E)-eicosatetraenoate + A + H2O. It catalyses the reaction 2-(5Z,8Z,11Z,14Z)-eicosatetraenoyl-sn-glycero-3-phosphocholine + AH2 + O2 = 2-[(15S)-hydroxy-(5Z,8Z,11Z,13E)-eicosatetraenoyl]-sn-glycero-3-phosphocholine + A + H2O. The catalysed reaction is 2-(5Z,8Z,11Z,14Z)-eicosatetraenoyl-sn-glycero-3-phosphocholine + AH2 + O2 = 2-[(15R)-hydroxy-(5Z,8Z,11Z,13E)-eicosatetraenoyl]-sn-glycero-3-phosphocholine + A + H2O. The enzyme catalyses 2-(5Z,8Z,11Z,14Z)-eicosatetraenoyl-sn-glycero-3-phosphocholine + AH2 + O2 = 2-[(11R)-hydroxy-(5Z,8Z,12E,14Z)-eicosatetraenoyl]-sn-glycero-3-phosphocholine + A + H2O. It carries out the reaction (9Z,12Z)-octadecadienoate + AH2 + O2 = 9-hydroxy-(10E,12Z)-octadecadienoate + A + H2O. It catalyses the reaction (9Z,12Z)-octadecadienoate + AH2 + O2 = 13-hydroxy-(9Z,11E)-octadecadienoate + A + H2O. The catalysed reaction is (5Z,8Z,11Z,14Z)-eicosatetraenoate + AH2 + O2 = (15R)-hydroxy-(5Z,8Z,11Z,13E)-eicosatetraenoate + A + H2O. The enzyme catalyses (5Z,8Z,11Z,14Z)-eicosatetraenoate + AH2 + O2 = (11R)-hydroxy-(5Z,8Z,12E,14Z)-eicosatetraenoate + A + H2O. It carries out the reaction (5Z,8Z,11Z,14Z,17Z)-eicosapentaenoate + AH2 + O2 = (11R)-hydroxy-(5Z,8Z,12E,14Z,17Z)-eicosapentaenoate + A + H2O. It catalyses the reaction (5Z,8Z,11Z,14Z,17Z)-eicosapentaenoate + AH2 + O2 = (18S)-hydroxy-(5Z,8Z,11Z,14Z,16E)-eicosapentaenoate + A + H2O. The catalysed reaction is (5Z,8Z,11Z,14Z,17Z)-eicosapentaenoate + AH2 + O2 = (18R)-hydroxy-(5Z,8Z,11Z,14Z,16E)-eicosapentaenoate + A + H2O. The enzyme catalyses (5Z,8Z,11Z,14Z,17Z)-eicosapentaenoate + AH2 + O2 = (15R)-hydroxy-(5Z,8Z,11Z,13E,17Z)-eicosapentaenoate + A + H2O. It carries out the reaction (5Z,8Z,11Z,14Z,17Z)-eicosapentaenoate + AH2 + O2 = (15S)-hydroxy-(5Z,8Z,11Z,13E,17Z)-eicosapentaenoate + A + H2O. It catalyses the reaction (7Z,10Z,13Z,16Z,19Z)-docosapentaenoate + AH2 + O2 = 13R-hydroxy-(7Z,10Z,14E,16Z,19Z)-docosapentaenoate + A + H2O. The catalysed reaction is (4Z,7Z,10Z,13Z,16Z,19Z)-docosahexaenoate + AH2 + O2 = 13-hydroxy-(4Z,7Z,10Z,14E,16Z,19Z)-docosahexaenoate + A + H2O. The enzyme catalyses (5S)-hydroxy-(6E,8Z,11Z,14Z)-eicosatetraenoate + AH2 + O2 = (5S,15R)-dihydroxy-(6E,8Z,11Z,13E)-eicosatetraenoate + A + H2O. It carries out the reaction (4Z,7Z,10Z,13Z,16Z,19Z)-docosahexaenoate + AH2 + O2 = 17R-hydroxy-(4Z,7Z,10Z,13Z,15E,19Z)-docosahexaenoate + A + H2O. It catalyses the reaction (5S)-hydroxy-(6E,8Z,11Z,14Z)-eicosatetraenoate + AH2 + O2 = (5S,15S)-dihydroxy-(6E,8Z,11Z,13E)-eicosatetraenoate + A + H2O. The catalysed reaction is (5S)-hydroxy-(6E,8Z,11Z,14Z)-eicosatetraenoate + AH2 + O2 = (5S,11R)-dihydroxy-(6E,8Z,12E,14Z)-eicosatetraenoate + A + H2O. The enzyme catalyses 2-(5Z,8Z,11Z,14Z-eicosatetraenoyl)-glycerol + 2 O2 = 2-glyceryl-prostaglandin G2. It carries out the reaction 2-glyceryl-prostaglandin G2 + AH2 = 2-glyceryl-prostaglandin H2 + A + H2O. It catalyses the reaction (5Z,8Z,11Z,14Z)-eicosatetraenoate + O2 = (15R)-hydroperoxy-(5Z,8Z,11Z,13E)-eicosatetraenoate. The catalysed reaction is (5Z,8Z,11Z,14Z)-eicosatetraenoate + O2 = 11R-hydroperoxy-(5Z,8Z,12E,14Z)-eicosatetraenoate. The enzyme catalyses (9Z,12Z)-octadecadienoate + AH2 + O2 = (9R)-hydroxy-(10E,12Z)-octadecadienoate + A + H2O. It carries out the reaction (9Z,12Z)-octadecadienoate + AH2 + O2 = (9S)-hydroxy-(10E,12Z)-octadecadienoate + A + H2O. It catalyses the reaction (9Z,12Z)-octadecadienoate + AH2 + O2 = (13S)-hydroxy-(9Z,11E)-octadecadienoate + A + H2O. The catalysed reaction is (9Z,12Z)-octadecadienoate + AH2 + O2 = (13R)-hydroxy-(9Z,11E)-octadecadienoate + A + H2O. It functions in the pathway lipid metabolism; prostaglandin biosynthesis. Dual cyclooxygenase and peroxidase in the biosynthesis pathway of prostanoids, a class of C20 oxylipins mainly derived from arachidonate ((5Z,8Z,11Z,14Z)-eicosatetraenoate, AA, C20:4(n-6)), with a particular role in the inflammatory response. The cyclooxygenase activity oxygenates AA to the hydroperoxy endoperoxide prostaglandin G2 (PGG2), and the peroxidase activity reduces PGG2 to the hydroxy endoperoxide prostaglandin H2 (PGH2), the precursor of all 2-series prostaglandins and thromboxanes. This complex transformation is initiated by abstraction of hydrogen at carbon 13 (with S-stereochemistry), followed by insertion of molecular O2 to form the endoperoxide bridge between carbon 9 and 11 that defines prostaglandins. The insertion of a second molecule of O2 (bis-oxygenase activity) yields a hydroperoxy group in PGG2 that is then reduced to PGH2 by two electrons. Similarly catalyzes successive cyclooxygenation and peroxidation of dihomo-gamma-linoleate (DGLA, C20:3(n-6)) and eicosapentaenoate (EPA, C20:5(n-3)) to corresponding PGH1 and PGH3, the precursors of 1- and 3-series prostaglandins. In an alternative pathway of prostanoid biosynthesis, converts 2-arachidonoyl lysophopholipids to prostanoid lysophopholipids, which are then hydrolyzed by intracellular phospholipases to release free prostanoids. Metabolizes 2-arachidonoyl glycerol yielding the glyceryl ester of PGH2, a process that can contribute to pain response. Generates lipid mediators from n-3 and n-6 polyunsaturated fatty acids (PUFAs) via a lipoxygenase-type mechanism. Oxygenates PUFAs to hydroperoxy compounds and then reduces them to corresponding alcohols. Plays a role in the generation of resolution phase interaction products (resolvins) during both sterile and infectious inflammation. Metabolizes docosahexaenoate (DHA, C22:6(n-3)) to 17R-HDHA, a precursor of the D-series resolvins (RvDs). As a component of the biosynthetic pathway of E-series resolvins (RvEs), converts eicosapentaenoate (EPA, C20:5(n-3)) primarily to 18S-HEPE that is further metabolized by ALOX5 and LTA4H to generate 18S-RvE1 and 18S-RvE2. In vascular endothelial cells, converts docosapentaenoate (DPA, C22:5(n-3)) to 13R-HDPA, a precursor for 13-series resolvins (RvTs) shown to activate macrophage phagocytosis during bacterial infection. In activated leukocytes, contributes to oxygenation of hydroxyeicosatetraenoates (HETE) to diHETES (5,15-diHETE and 5,11-diHETE). Can also use linoleate (LA, (9Z,12Z)-octadecadienoate, C18:2(n-6)) as substrate and produce hydroxyoctadecadienoates (HODEs) in a regio- and stereospecific manner, being (9R)-HODE ((9R)-hydroxy-(10E,12Z)-octadecadienoate) and (13S)-HODE ((13S)-hydroxy-(9Z,11E)-octadecadienoate) its major products. During neuroinflammation, plays a role in neuronal secretion of specialized preresolving mediators (SPMs) 15R-lipoxin A4 that regulates phagocytic microglia. The sequence is that of Prostaglandin G/H synthase 2 (PTGS2) from Bos taurus (Bovine).